We begin with the raw amino-acid sequence, 194 residues long: Putative lipoprotein LppK (194 aa).

A signal peptide spans 1-26 (MSRWTHRTFFIALSAIVTTAGFGSSG). Residue Cys-27 is the site of N-palmitoyl cysteine attachment. Cys-27 carries S-diacylglycerol cysteine lipidation. The tract at residues 174–194 (GNSSGLTNPAPIKAPTPTPSH) is disordered. Pro residues predominate over residues 185 to 194 (IKAPTPTPSH).

It belongs to the MTB12 family.

Its subcellular location is the cell membrane. The sequence is that of Putative lipoprotein LppK (lppK) from Mycobacterium leprae (strain TN).